The sequence spans 212 residues: Ribosomal RNA large subunit methyltransferase E (212 aa).

S-adenosyl-L-methionine-binding residues include Gly-56, Trp-58, Asp-78, Asp-94, and Asp-117. Lys-157 (proton acceptor) is an active-site residue.

The protein belongs to the class I-like SAM-binding methyltransferase superfamily. RNA methyltransferase RlmE family.

Its subcellular location is the cytoplasm. The enzyme catalyses uridine(2552) in 23S rRNA + S-adenosyl-L-methionine = 2'-O-methyluridine(2552) in 23S rRNA + S-adenosyl-L-homocysteine + H(+). Specifically methylates the uridine in position 2552 of 23S rRNA at the 2'-O position of the ribose in the fully assembled 50S ribosomal subunit. The protein is Ribosomal RNA large subunit methyltransferase E of Ehrlichia chaffeensis (strain ATCC CRL-10679 / Arkansas).